Consider the following 364-residue polypeptide: UDP-N-acetylglucosamine--N-acetylmuramyl-(pentapeptide) pyrophosphoryl-undecaprenol N-acetylglucosamine transferase (364 aa).

Residues 10-12 (TGG), asparagine 128, arginine 170, serine 199, isoleucine 250, and glutamine 295 each bind UDP-N-acetyl-alpha-D-glucosamine.

Belongs to the glycosyltransferase 28 family. MurG subfamily.

The protein resides in the cell inner membrane. It catalyses the reaction di-trans,octa-cis-undecaprenyl diphospho-N-acetyl-alpha-D-muramoyl-L-alanyl-D-glutamyl-meso-2,6-diaminopimeloyl-D-alanyl-D-alanine + UDP-N-acetyl-alpha-D-glucosamine = di-trans,octa-cis-undecaprenyl diphospho-[N-acetyl-alpha-D-glucosaminyl-(1-&gt;4)]-N-acetyl-alpha-D-muramoyl-L-alanyl-D-glutamyl-meso-2,6-diaminopimeloyl-D-alanyl-D-alanine + UDP + H(+). Its pathway is cell wall biogenesis; peptidoglycan biosynthesis. Cell wall formation. Catalyzes the transfer of a GlcNAc subunit on undecaprenyl-pyrophosphoryl-MurNAc-pentapeptide (lipid intermediate I) to form undecaprenyl-pyrophosphoryl-MurNAc-(pentapeptide)GlcNAc (lipid intermediate II). This Chlorobium limicola (strain DSM 245 / NBRC 103803 / 6330) protein is UDP-N-acetylglucosamine--N-acetylmuramyl-(pentapeptide) pyrophosphoryl-undecaprenol N-acetylglucosamine transferase.